Here is a 202-residue protein sequence, read N- to C-terminus: Superoxide dismutase [Mn] (202 aa).

4 residues coordinate Mn(2+): histidine 27, histidine 82, aspartate 164, and histidine 168.

It belongs to the iron/manganese superoxide dismutase family. In terms of assembly, homodimer. It depends on Mn(2+) as a cofactor.

It catalyses the reaction 2 superoxide + 2 H(+) = H2O2 + O2. Destroys superoxide anion radicals which are normally produced within the cells and which are toxic to biological systems. In Listeria monocytogenes serovar 1/2a (strain ATCC BAA-679 / EGD-e), this protein is Superoxide dismutase [Mn] (sodA).